The primary structure comprises 462 residues: CUGBP Elav-like family member 3-B (462 aa).

RRM domains lie at 7–88 (IKLF…PADS), 95–175 (RKLF…FADT), and 377–455 (CNIF…LKRP).

The protein belongs to the CELF/BRUNOL family.

The protein localises to the nucleus. It localises to the cytoplasm. Its function is as follows. RNA-binding protein that may be involved in the regulation of pre-mRNA alternative splicing. This chain is CUGBP Elav-like family member 3-B (tnrc4-b), found in Xenopus laevis (African clawed frog).